The following is a 232-amino-acid chain: MAGFKKKVYTSGLGTAEPYAYLSKPDYGNEERGFGNPRGVYKVDLTLSNKDPRCQAMVDEIVKTHEEAYAAAVEEFEANPPQVQRGKKPLTPYEGDMPFFDNGDGTTTFKFKCYASFQDKKTKETKHINLVVVDSKGKKIQEVPIIGGGSKLKVKYSLVPYKWNTAVGASVKLQLESVMLVELATFGGGGEDEWADEVEDGGYTASESRQSRDEQEWQEDEHEETPDDDEDF.

Composition is skewed to acidic residues over residues 190–200 and 216–232; these read GEDEWADEVED and EWQE…DEDF. The segment at 190–232 is disordered; it reads GEDEWADEVEDGGYTASESRQSRDEQEWQEDEHEETPDDDEDF. Positions 213–232 are dimerization and interaction with the viral DNA polymerase and helicase; that stretch reads DEQEWQEDEHEETPDDDEDF.

It belongs to the Teseptimavirus single-stranded DNA-binding protein family. In terms of assembly, homodimer. Interacts (via C-terminus) with the viral DNA polymerase. Interacts with the viral helicase/primase. Part of the replicase complex that includes the DNA polymerase, the primase/helicase and the single-stranded DNA binding protein.

Its function is as follows. Single-stranded DNA-binding protein that participates in viral DNA replication, formation of concatemers, recombination and repair of double-stranded breaks. Coats the lagging-strand ssDNA as the replication fork advances and stimulates the activities of viral DNA polymerase and primase/helicase. Coordinates simultaneous synthesis of leading- and lagging-strands. Together with DNA primase/helicase, promotes pairing of two homologous DNA molecules containing complementary single-stranded regions and mediates homologous DNA strand exchange. Also promotes the formation of joint molecules. Disrupts loops, hairpins and other secondary structures present on ssDNA to reduce and eliminate pausing of viral DNA polymerase at specific sites during elongation. This Enterobacteria phage T3 (Bacteriophage T3) protein is Single-stranded DNA-binding protein (2.5).